A 133-amino-acid chain; its full sequence is Small ribosomal subunit protein uS8 (133 aa).

This sequence belongs to the universal ribosomal protein uS8 family. Part of the 30S ribosomal subunit. Contacts proteins S5 and S12.

Its function is as follows. One of the primary rRNA binding proteins, it binds directly to 16S rRNA central domain where it helps coordinate assembly of the platform of the 30S subunit. In Synechococcus elongatus (strain ATCC 33912 / PCC 7942 / FACHB-805) (Anacystis nidulans R2), this protein is Small ribosomal subunit protein uS8.